Reading from the N-terminus, the 257-residue chain is NAD-capped RNA hydrolase NudC (257 aa).

2 residues coordinate substrate: K25 and R69. Positions 98 and 101 each coordinate Zn(2+). E111 lines the substrate pocket. Residues C116 and C119 each coordinate Zn(2+). Substrate is bound at residue Y124. A Nudix hydrolase domain is found at 125 to 248; that stretch reads PQIAPCIIVA…TVARRLIEDT (124 aa). 3 residues coordinate a divalent metal cation: A158, E174, and E178. A Nudix box motif is present at residues 159 to 180; the sequence is GFVEVGETLEQAVAREVMEESG. 192-199 is a substrate binding site; sequence QPWPFPQS. E219 contributes to the a divalent metal cation binding site. Position 241 (A241) interacts with substrate.

The protein belongs to the Nudix hydrolase family. NudC subfamily. As to quaternary structure, homodimer. The cofactor is Mg(2+). Requires Mn(2+) as cofactor. Zn(2+) serves as cofactor.

It catalyses the reaction a 5'-end NAD(+)-phospho-ribonucleoside in mRNA + H2O = a 5'-end phospho-adenosine-phospho-ribonucleoside in mRNA + beta-nicotinamide D-ribonucleotide + 2 H(+). The catalysed reaction is NAD(+) + H2O = beta-nicotinamide D-ribonucleotide + AMP + 2 H(+). It carries out the reaction NADH + H2O = reduced beta-nicotinamide D-ribonucleotide + AMP + 2 H(+). Functionally, mRNA decapping enzyme that specifically removes the nicotinamide adenine dinucleotide (NAD) cap from a subset of mRNAs by hydrolyzing the diphosphate linkage to produce nicotinamide mononucleotide (NMN) and 5' monophosphate mRNA. The NAD-cap is present at the 5'-end of some mRNAs and stabilizes RNA against 5'-processing. Has preference for mRNAs with a 5'-end purine. Catalyzes the hydrolysis of a broad range of dinucleotide pyrophosphates. This Escherichia coli (strain 55989 / EAEC) protein is NAD-capped RNA hydrolase NudC.